The following is a 435-amino-acid chain: 3-phosphoshikimate 1-carboxyvinyltransferase (435 aa).

3-phosphoshikimate is bound by residues lysine 21, serine 22, and arginine 26. Lysine 21 is a binding site for phosphoenolpyruvate. The phosphoenolpyruvate site is built by glycine 99 and arginine 127. Serine 173, glutamine 175, aspartate 323, and lysine 350 together coordinate 3-phosphoshikimate. Glutamine 175 is a phosphoenolpyruvate binding site. Aspartate 323 acts as the Proton acceptor in catalysis. The phosphoenolpyruvate site is built by arginine 354 and arginine 396.

The protein belongs to the EPSP synthase family. Monomer.

Its subcellular location is the cytoplasm. The enzyme catalyses 3-phosphoshikimate + phosphoenolpyruvate = 5-O-(1-carboxyvinyl)-3-phosphoshikimate + phosphate. The protein operates within metabolic intermediate biosynthesis; chorismate biosynthesis; chorismate from D-erythrose 4-phosphate and phosphoenolpyruvate: step 6/7. Its function is as follows. Catalyzes the transfer of the enolpyruvyl moiety of phosphoenolpyruvate (PEP) to the 5-hydroxyl of shikimate-3-phosphate (S3P) to produce enolpyruvyl shikimate-3-phosphate and inorganic phosphate. The polypeptide is 3-phosphoshikimate 1-carboxyvinyltransferase (Akkermansia muciniphila (strain ATCC BAA-835 / DSM 22959 / JCM 33894 / BCRC 81048 / CCUG 64013 / CIP 107961 / Muc)).